A 679-amino-acid polypeptide reads, in one-letter code: Protein hook (679 aa).

A Calponin-homology (CH) domain is found at 6–123 (NEMYYSLLEW…RLLQLVLGCA (118 aa)). Coiled coils occupy residues 135 to 437 (EIMC…LKCG) and 480 to 574 (QTAL…QEIL).

Belongs to the hook family. As to quaternary structure, homodimer. Interacts with microtubules via its N-terminus.

It is found in the cytoplasm. It localises to the cytoskeleton. The protein localises to the endosome. The protein resides in the synapse. In terms of biological role, involved in endocytic trafficking by stabilizing organelles of the endocytic pathway. Probably acts as a cytoskeletal linker protein required to tether endosome vesicles to the cytoskeleton. Involved in modulation of endocytosis at stages required for down-regulation of membrane proteins that control synapse size. Not involved in synaptic vesicle recycling. Required in R7 cells for boss endocytosis into multivesicular bodies (MVBs). Has a role in regulating adult longevity. This chain is Protein hook, found in Drosophila erecta (Fruit fly).